The chain runs to 186 residues: A-type ATP synthase subunit E (186 aa).

This sequence belongs to the V-ATPase E subunit family. Has multiple subunits with at least A(3), B(3), C, D, E, F, H, I and proteolipid K(x).

It localises to the cell membrane. Component of the A-type ATP synthase that produces ATP from ADP in the presence of a proton gradient across the membrane. The sequence is that of A-type ATP synthase subunit E from Methanocella arvoryzae (strain DSM 22066 / NBRC 105507 / MRE50).